A 173-amino-acid polypeptide reads, in one-letter code: Crossover junction endodeoxyribonuclease RuvC (173 aa).

Residues aspartate 8, glutamate 67, and aspartate 139 contribute to the active site. 3 residues coordinate Mg(2+): aspartate 8, glutamate 67, and aspartate 139.

The protein belongs to the RuvC family. In terms of assembly, homodimer which binds Holliday junction (HJ) DNA. The HJ becomes 2-fold symmetrical on binding to RuvC with unstacked arms; it has a different conformation from HJ DNA in complex with RuvA. In the full resolvosome a probable DNA-RuvA(4)-RuvB(12)-RuvC(2) complex forms which resolves the HJ. It depends on Mg(2+) as a cofactor.

It is found in the cytoplasm. It carries out the reaction Endonucleolytic cleavage at a junction such as a reciprocal single-stranded crossover between two homologous DNA duplexes (Holliday junction).. In terms of biological role, the RuvA-RuvB-RuvC complex processes Holliday junction (HJ) DNA during genetic recombination and DNA repair. Endonuclease that resolves HJ intermediates. Cleaves cruciform DNA by making single-stranded nicks across the HJ at symmetrical positions within the homologous arms, yielding a 5'-phosphate and a 3'-hydroxyl group; requires a central core of homology in the junction. The consensus cleavage sequence is 5'-(A/T)TT(C/G)-3'. Cleavage occurs on the 3'-side of the TT dinucleotide at the point of strand exchange. HJ branch migration catalyzed by RuvA-RuvB allows RuvC to scan DNA until it finds its consensus sequence, where it cleaves and resolves the cruciform DNA. In Shigella flexneri serotype 5b (strain 8401), this protein is Crossover junction endodeoxyribonuclease RuvC.